Reading from the N-terminus, the 586-residue chain is Aspartate--tRNA(Asp/Asn) ligase (586 aa).

E172 lines the L-aspartate pocket. The interval 196–199 (QLYK) is aspartate. R218 is a binding site for L-aspartate. ATP is bound by residues 218-220 (RDE) and Q227. H446 lines the L-aspartate pocket. Residue E480 coordinates ATP. R487 is a binding site for L-aspartate. 532–535 (GIDR) contributes to the ATP binding site.

Belongs to the class-II aminoacyl-tRNA synthetase family. Type 1 subfamily. Homodimer.

It localises to the cytoplasm. It catalyses the reaction tRNA(Asx) + L-aspartate + ATP = L-aspartyl-tRNA(Asx) + AMP + diphosphate. Its function is as follows. Aspartyl-tRNA synthetase with relaxed tRNA specificity since it is able to aspartylate not only its cognate tRNA(Asp) but also tRNA(Asn). Reaction proceeds in two steps: L-aspartate is first activated by ATP to form Asp-AMP and then transferred to the acceptor end of tRNA(Asp/Asn). This is Aspartate--tRNA(Asp/Asn) ligase from Borrelia garinii subsp. bavariensis (strain ATCC BAA-2496 / DSM 23469 / PBi) (Borreliella bavariensis).